Consider the following 355-residue polypeptide: 3'-5' exonuclease (355 aa).

The tract at residues 1–121 is disordered; sequence MDKYLIKLPN…PSPEKEKPEK (121 aa). Basic and acidic residues-rich tracts occupy residues 17–29, 36–50, and 72–92; these read VSDK…KETP, AKKD…KENT, and KNLD…ENPP. 2 positions are modified to phosphoserine: Ser105 and Ser113. Residues 147-315 enclose the 3'-5' exonuclease domain; that stretch reads VMQWVEKQKE…GQVIYRDLEQ (169 aa). The Mg(2+) site is built by Asp164, Glu166, and Asp302.

The protein belongs to the WRNexo family.

The protein localises to the nucleus. Its function is as follows. Has exonuclease activity on both single-stranded and duplex templates bearing overhangs, but not blunt ended duplex DNA, and cleaves in a 3'-5' direction. Essential for the formation of DNA replication focal centers. Has an important role in maintaining genome stability. In Drosophila ananassae (Fruit fly), this protein is 3'-5' exonuclease.